Here is a 469-residue protein sequence, read N- to C-terminus: 3-isopropylmalate dehydratase large subunit (469 aa).

[4Fe-4S] cluster is bound by residues cysteine 349, cysteine 409, and cysteine 412. Residues glutamine 424 to glycine 443 form a disordered region.

Belongs to the aconitase/IPM isomerase family. LeuC type 1 subfamily. As to quaternary structure, heterodimer of LeuC and LeuD. [4Fe-4S] cluster serves as cofactor.

The catalysed reaction is (2R,3S)-3-isopropylmalate = (2S)-2-isopropylmalate. It functions in the pathway amino-acid biosynthesis; L-leucine biosynthesis; L-leucine from 3-methyl-2-oxobutanoate: step 2/4. Functionally, catalyzes the isomerization between 2-isopropylmalate and 3-isopropylmalate, via the formation of 2-isopropylmaleate. This Thermosynechococcus vestitus (strain NIES-2133 / IAM M-273 / BP-1) protein is 3-isopropylmalate dehydratase large subunit.